The following is a 148-amino-acid chain: 3-hydroxyacyl-[acyl-carrier-protein] dehydratase FabZ (148 aa).

His-47 is a catalytic residue.

It belongs to the thioester dehydratase family. FabZ subfamily.

It localises to the cytoplasm. It catalyses the reaction a (3R)-hydroxyacyl-[ACP] = a (2E)-enoyl-[ACP] + H2O. Its function is as follows. Involved in unsaturated fatty acids biosynthesis. Catalyzes the dehydration of short chain beta-hydroxyacyl-ACPs and long chain saturated and unsaturated beta-hydroxyacyl-ACPs. The polypeptide is 3-hydroxyacyl-[acyl-carrier-protein] dehydratase FabZ (Hydrogenobaculum sp. (strain Y04AAS1)).